The following is a 209-amino-acid chain: Imidazole glycerol phosphate synthase subunit HisH (209 aa).

Residues 3 to 209 (SVAVIDYGMG…ANFLTWNGVS (207 aa)) form the Glutamine amidotransferase type-1 domain. The Nucleophile role is filled by Cys82. Catalysis depends on residues His187 and Glu189.

As to quaternary structure, heterodimer of HisH and HisF.

It is found in the cytoplasm. It catalyses the reaction 5-[(5-phospho-1-deoxy-D-ribulos-1-ylimino)methylamino]-1-(5-phospho-beta-D-ribosyl)imidazole-4-carboxamide + L-glutamine = D-erythro-1-(imidazol-4-yl)glycerol 3-phosphate + 5-amino-1-(5-phospho-beta-D-ribosyl)imidazole-4-carboxamide + L-glutamate + H(+). The enzyme catalyses L-glutamine + H2O = L-glutamate + NH4(+). It functions in the pathway amino-acid biosynthesis; L-histidine biosynthesis; L-histidine from 5-phospho-alpha-D-ribose 1-diphosphate: step 5/9. In terms of biological role, IGPS catalyzes the conversion of PRFAR and glutamine to IGP, AICAR and glutamate. The HisH subunit catalyzes the hydrolysis of glutamine to glutamate and ammonia as part of the synthesis of IGP and AICAR. The resulting ammonia molecule is channeled to the active site of HisF. This chain is Imidazole glycerol phosphate synthase subunit HisH, found in Nitrosococcus oceani (strain ATCC 19707 / BCRC 17464 / JCM 30415 / NCIMB 11848 / C-107).